Consider the following 374-residue polypeptide: Chaperone protein DnaJ (374 aa).

In terms of domain architecture, J spans 5–70 (DYYDVLGVAK…DKRAAYDRFG (66 aa)). The CR-type zinc finger occupies 131–209 (GCEEKIRIPT…CHGQGRVQEY (79 aa)). Residues Cys-144, Cys-147, Cys-161, Cys-164, Cys-183, Cys-186, Cys-197, and Cys-200 each coordinate Zn(2+). 4 CXXCXGXG motif repeats span residues 144 to 151 (CKTCDGSG), 161 to 168 (CGTCGGAG), 183 to 190 (CPECHGAG), and 197 to 204 (CRDCHGQG).

This sequence belongs to the DnaJ family. As to quaternary structure, homodimer. Zn(2+) serves as cofactor.

It localises to the cytoplasm. Participates actively in the response to hyperosmotic and heat shock by preventing the aggregation of stress-denatured proteins and by disaggregating proteins, also in an autonomous, DnaK-independent fashion. Unfolded proteins bind initially to DnaJ; upon interaction with the DnaJ-bound protein, DnaK hydrolyzes its bound ATP, resulting in the formation of a stable complex. GrpE releases ADP from DnaK; ATP binding to DnaK triggers the release of the substrate protein, thus completing the reaction cycle. Several rounds of ATP-dependent interactions between DnaJ, DnaK and GrpE are required for fully efficient folding. Also involved, together with DnaK and GrpE, in the DNA replication of plasmids through activation of initiation proteins. This is Chaperone protein DnaJ from Marinomonas sp. (strain MWYL1).